A 50-amino-acid chain; its full sequence is Large ribosomal subunit protein bL33B (50 aa).

It belongs to the bacterial ribosomal protein bL33 family.

The polypeptide is Large ribosomal subunit protein bL33B (Mycoplasmopsis agalactiae (strain NCTC 10123 / CIP 59.7 / PG2) (Mycoplasma agalactiae)).